We begin with the raw amino-acid sequence, 434 residues long: MAKTDIARRVYNHAWKLDPIIRSLIDTDFYKLLMLQMIWKLYPDVNASFTLINRTKRVHLAEEIDEGELREQLDHARTLRLSKKEMIWLAGNSFYGRAQIFEPEFLAWLSNFQLPEYELSKKDGQYVLDFHGAWKETTMWEIPALAIVNELRSRSAMKALGPFTLDVLYARAKAKMWSKVERLRELPGLRISDFGTRRRHSFLWQRWCVEALKEGIGPAFTGTSNVLLAMDSDLEAVGTNAHELPMVAAALAQTDEQLRNAPYKILRDWNKLYGGNLLIVLPDAFGTAAFLRDAPEWVADWTGFRPDSAPPIEGGEKIIDWWKKMGRDPRQKLLIFSDGLDVDAIIDTYRHFEGRVRMSFGWGTNLTNDFAGCAPTEISGLNPISVVCKVSDANGRPAVKLSDNPQKATGEPAEVERYLKFFGTEDRVDQTVLV.

The residue at position 242 (H242) is a Phosphohistidine; by autocatalysis.

This sequence belongs to the NAPRTase family. In terms of processing, transiently phosphorylated on a His residue during the reaction cycle. Phosphorylation strongly increases the affinity for substrates and increases the rate of nicotinate D-ribonucleotide production. Dephosphorylation regenerates the low-affinity form of the enzyme, leading to product release.

The enzyme catalyses nicotinate + 5-phospho-alpha-D-ribose 1-diphosphate + ATP + H2O = nicotinate beta-D-ribonucleotide + ADP + phosphate + diphosphate. It functions in the pathway cofactor biosynthesis; NAD(+) biosynthesis; nicotinate D-ribonucleotide from nicotinate: step 1/1. In terms of biological role, catalyzes the synthesis of beta-nicotinate D-ribonucleotide from nicotinate and 5-phospho-D-ribose 1-phosphate at the expense of ATP. In Rhizobium etli (strain CIAT 652), this protein is Nicotinate phosphoribosyltransferase.